A 380-amino-acid polypeptide reads, in one-letter code: Chorismate synthase (380 aa).

Position 47 (Arg-47) interacts with NADP(+). Residues 124 to 126 (RSS), Gly-288, 303 to 307 (KPTST), and Arg-329 contribute to the FMN site.

This sequence belongs to the chorismate synthase family. As to quaternary structure, homotetramer. The cofactor is FMNH2.

The enzyme catalyses 5-O-(1-carboxyvinyl)-3-phosphoshikimate = chorismate + phosphate. It participates in metabolic intermediate biosynthesis; chorismate biosynthesis; chorismate from D-erythrose 4-phosphate and phosphoenolpyruvate: step 7/7. Catalyzes the anti-1,4-elimination of the C-3 phosphate and the C-6 proR hydrogen from 5-enolpyruvylshikimate-3-phosphate (EPSP) to yield chorismate, which is the branch point compound that serves as the starting substrate for the three terminal pathways of aromatic amino acid biosynthesis. This reaction introduces a second double bond into the aromatic ring system. The chain is Chorismate synthase from Leptospira borgpetersenii serovar Hardjo-bovis (strain JB197).